Reading from the N-terminus, the 390-residue chain is MNIIKNFLQKESASGILIILAMILALILANNGVLNKFYSEILRLDSGIIFGEFKLIKPTILWVNDGLMAIFFFFIGLELKYEFLEGELNSISKVALPSIAGIGGVIVPAVIFYVLNHANRFDVNGWAIPTVSDTAFALAVLFLLGSRIPISLKLFLLSLAIIDDVAAIIIIAIFYTKTLSIISLFISFCAIVILTILNYKNNQNIYIYLLCGIVLWVSVLMSGIHATLAGIIASMFIPLRDEDGDPEHGMLQSVMHFLHPIVAFLILPIFAFSNAGVVFSEDSILNLTHPVPLGIIFGLFIGKQIGVFSFAFLAIKCKLAELPNGCGWLHLYGLSILTGVGMSMSLFIDGLAYAESDAFLYANKIAILLASTMCAVTGYFVLRKASKSQN.

Transmembrane regions (helical) follow at residues 14–34 (SGILIILAMILALILANNGVL), 59–79 (TILWVNDGLMAIFFFFIGLEL), 94–114 (VALPSIAGIGGVIVPAVIFYV), 125–145 (GWAIPTVSDTAFALAVLFLLG), 154–174 (LFLLSLAIIDDVAAIIIIAIF), 179–199 (LSIISLFISFCAIVILTILNY), 205–225 (IYIYLLCGIVLWVSVLMSGIH), 260–280 (PIVAFLILPIFAFSNAGVVFS), 295–315 (IIFGLFIGKQIGVFSFAFLAI), 328–348 (WLHLYGLSILTGVGMSMSLFI), and 362–382 (ANKIAILLASTMCAVTGYFVL).

The protein belongs to the NhaA Na(+)/H(+) (TC 2.A.33) antiporter family.

The protein resides in the cell inner membrane. The catalysed reaction is Na(+)(in) + 2 H(+)(out) = Na(+)(out) + 2 H(+)(in). Na(+)/H(+) antiporter that extrudes sodium in exchange for external protons. The chain is Na(+)/H(+) antiporter NhaA 1 from Campylobacter fetus subsp. fetus (strain 82-40).